Reading from the N-terminus, the 397-residue chain is MGWKTLDDMDLAGKVVLVRVDVNVPMEKGEVTDATRIEKIVPTVEDILKKGGKPVLLAHFGRPKGKVVDEMSLRLVLPALQKALPGTKVSFAPDCVGEEAEKAVAAMLEGEVLLLENTRFHAGEEKNDPELAAAMAKLGDVYVNDAFSAAHRAHSSTEGIARLLPSAAGRLMEAELKALDAALGQPERPVVAVVGGAKVSTKLDLLGNLVGRVDHLVIGGGMANTFLVAQGTEVGKSLAERDMAETAREIVAKAKAAGCTIHLPLDVVVAREFKAGAANETVEAGACPADAMILDAGPKTVAALSEVFASARTLIWNGPLGAFEIEPFDAATNAAALQVAQLTKAGQLISVAGGGDTVAALNKAGAAEGFSYISTAGGAFLEWMEGKELPGVAALNV.

Substrate contacts are provided by residues 21 to 23 (DVN), Arg36, 59 to 62 (HFGR), Arg119, and Arg152. ATP is bound by residues Lys202, Glu324, and 354-357 (GGDT).

The protein belongs to the phosphoglycerate kinase family. As to quaternary structure, monomer.

Its subcellular location is the cytoplasm. The enzyme catalyses (2R)-3-phosphoglycerate + ATP = (2R)-3-phospho-glyceroyl phosphate + ADP. The protein operates within carbohydrate degradation; glycolysis; pyruvate from D-glyceraldehyde 3-phosphate: step 2/5. The chain is Phosphoglycerate kinase from Cereibacter sphaeroides (strain ATCC 17025 / ATH 2.4.3) (Rhodobacter sphaeroides).